We begin with the raw amino-acid sequence, 155 residues long: Small ribosomal subunit protein uS7 (155 aa).

This sequence belongs to the universal ribosomal protein uS7 family. As to quaternary structure, part of the 30S ribosomal subunit. Contacts proteins S9 and S11.

One of the primary rRNA binding proteins, it binds directly to 16S rRNA where it nucleates assembly of the head domain of the 30S subunit. Is located at the subunit interface close to the decoding center, probably blocks exit of the E-site tRNA. The polypeptide is Small ribosomal subunit protein uS7 (Prosthecochloris aestuarii (strain DSM 271 / SK 413)).